Reading from the N-terminus, the 228-residue chain is MHSHSTLILEAHDIQKNFYHPVQVKILQSVSLQVQMGESVAIIGRSGEGKSTLLQILGTLEQPCSGTLTIDNQLISSSNKSQIRNELIGFVFQSFHLLEDYTALENVLMPARIGRKSVAKGSLTEQRGMELLHQVGLQERAHFHTKLLSGGEKQRIALARAMCNDPKIIFADEPSGNLDRQTAHLMHEILLKFIHGQQKALVLVTHDPELAKLCSSQYELINGCLYRR.

The 220-residue stretch at 9-228 (LEAHDIQKNF…ELINGCLYRR (220 aa)) folds into the ABC transporter domain. 44 to 51 (GRSGEGKS) is an ATP binding site.

Belongs to the ABC transporter superfamily. Lipoprotein translocase (TC 3.A.1.125) family. In terms of assembly, the complex is composed of two ATP-binding proteins (LolD) and two transmembrane proteins (LolC and LolE).

The protein localises to the cell inner membrane. Functionally, part of the ABC transporter complex LolCDE involved in the translocation of mature outer membrane-directed lipoproteins, from the inner membrane to the periplasmic chaperone, LolA. Responsible for the formation of the LolA-lipoprotein complex in an ATP-dependent manner. This is Lipoprotein-releasing system ATP-binding protein LolD from Protochlamydia amoebophila (strain UWE25).